The primary structure comprises 620 residues: 1-deoxy-D-xylulose-5-phosphate synthase (620 aa).

Residues histidine 80 and 121-123 each bind thiamine diphosphate; that span reads GHS. Mg(2+) is bound at residue aspartate 152. Residues 153 to 154, asparagine 181, tyrosine 288, and glutamate 370 each bind thiamine diphosphate; that span reads GA. Asparagine 181 provides a ligand contact to Mg(2+).

The protein belongs to the transketolase family. DXPS subfamily. As to quaternary structure, homodimer. Mg(2+) serves as cofactor. Thiamine diphosphate is required as a cofactor.

It carries out the reaction D-glyceraldehyde 3-phosphate + pyruvate + H(+) = 1-deoxy-D-xylulose 5-phosphate + CO2. The protein operates within metabolic intermediate biosynthesis; 1-deoxy-D-xylulose 5-phosphate biosynthesis; 1-deoxy-D-xylulose 5-phosphate from D-glyceraldehyde 3-phosphate and pyruvate: step 1/1. Functionally, catalyzes the acyloin condensation reaction between C atoms 2 and 3 of pyruvate and glyceraldehyde 3-phosphate to yield 1-deoxy-D-xylulose-5-phosphate (DXP). The protein is 1-deoxy-D-xylulose-5-phosphate synthase of Photobacterium profundum (strain SS9).